The sequence spans 312 residues: Methionyl-tRNA formyltransferase (312 aa).

Position 111–114 (111–114) interacts with (6S)-5,6,7,8-tetrahydrofolate; it reads SLLP.

This sequence belongs to the Fmt family.

It catalyses the reaction L-methionyl-tRNA(fMet) + (6R)-10-formyltetrahydrofolate = N-formyl-L-methionyl-tRNA(fMet) + (6S)-5,6,7,8-tetrahydrofolate + H(+). In terms of biological role, attaches a formyl group to the free amino group of methionyl-tRNA(fMet). The formyl group appears to play a dual role in the initiator identity of N-formylmethionyl-tRNA by promoting its recognition by IF2 and preventing the misappropriation of this tRNA by the elongation apparatus. The chain is Methionyl-tRNA formyltransferase from Myxococcus xanthus (strain DK1622).